An 839-amino-acid chain; its full sequence is Valine--tRNA ligase (839 aa).

Residues 41–51 (PNVTGKLHIGH) carry the 'HIGH' region motif. Residues 315 to 343 (RENIVLKLKKENLIDKIENIKSNIIMSER) are a coiled coil. Residues 517–521 (KMSKS) carry the 'KMSKS' region motif. Lys-520 is an ATP binding site. Residues 813-839 (INNASEIKVKEEKEKLEKYIKEFEEIK) adopt a coiled-coil conformation.

Belongs to the class-I aminoacyl-tRNA synthetase family. ValS type 1 subfamily. As to quaternary structure, monomer.

It is found in the cytoplasm. The catalysed reaction is tRNA(Val) + L-valine + ATP = L-valyl-tRNA(Val) + AMP + diphosphate. Its function is as follows. Catalyzes the attachment of valine to tRNA(Val). As ValRS can inadvertently accommodate and process structurally similar amino acids such as threonine, to avoid such errors, it has a 'posttransfer' editing activity that hydrolyzes mischarged Thr-tRNA(Val) in a tRNA-dependent manner. This is Valine--tRNA ligase from Mycoplasma mobile (strain ATCC 43663 / 163K / NCTC 11711) (Mesomycoplasma mobile).